We begin with the raw amino-acid sequence, 118 residues long: Small ribosomal subunit protein uS13 (118 aa).

Residues Ser-94–Lys-118 are disordered.

The protein belongs to the universal ribosomal protein uS13 family. In terms of assembly, part of the 30S ribosomal subunit. Forms a loose heterodimer with protein S19. Forms two bridges to the 50S subunit in the 70S ribosome.

Functionally, located at the top of the head of the 30S subunit, it contacts several helices of the 16S rRNA. In the 70S ribosome it contacts the 23S rRNA (bridge B1a) and protein L5 of the 50S subunit (bridge B1b), connecting the 2 subunits; these bridges are implicated in subunit movement. Contacts the tRNAs in the A and P-sites. The protein is Small ribosomal subunit protein uS13 of Idiomarina loihiensis (strain ATCC BAA-735 / DSM 15497 / L2-TR).